The primary structure comprises 146 residues: Hemoglobin subunit beta (146 aa).

The 145-residue stretch at histidine 2–histidine 146 folds into the Globin domain. 2 residues coordinate heme b: histidine 63 and histidine 92.

It belongs to the globin family. Heterotetramer of two alpha chains and two beta chains. Red blood cells.

Functionally, involved in oxygen transport from the lung to the various peripheral tissues. The sequence is that of Hemoglobin subunit beta (HBB) from Streptopelia orientalis (Eastern turtle dove).